A 380-amino-acid chain; its full sequence is Probable G-protein coupled receptor 132 (380 aa).

Over 1–45 the chain is Extracellular; sequence MCPMLLKNGYNGNATPVTTTAPWASLGLSAKTCNNVSFEESRIVL. Asn-35 carries N-linked (GlcNAc...) asparagine glycosylation. Residues 46–68 traverse the membrane as a helical segment; that stretch reads VVVYSAVCTLGVPANCLTAWLAL. The Cytoplasmic segment spans residues 69–79; the sequence is LQVLQGNVLAV. Residues 80 to 102 traverse the membrane as a helical segment; the sequence is YLLCLALCELLYTGTLPLWVIYI. At 103-116 the chain is on the extracellular side; it reads RNQHRWTLGLLACK. The cysteines at positions 115 and 186 are disulfide-linked. A helical transmembrane segment spans residues 117 to 138; sequence VTAYIFFCNIYVSILFLCCISC. The Cytoplasmic portion of the chain corresponds to 139–158; that stretch reads DRFVAVVYALESRGRRRRRT. A helical membrane pass occupies residues 159-178; it reads AILISACIFILVGIVHYPVF. The Extracellular portion of the chain corresponds to 179-197; the sequence is QTEDKETCFDMLQMDSRIA. The chain crosses the membrane as a helical span at residues 198–220; it reads GYYYARFTVGFAIPLSIIAFTNH. The Cytoplasmic portion of the chain corresponds to 221–246; that stretch reads RIFRSIKQSMGLSAAQKAKVKHSAIA. Residues 247 to 269 form a helical membrane-spanning segment; that stretch reads VVVIFLVCFAPYHLVLLVKAAAF. At 270–288 the chain is on the extracellular side; that stretch reads SYYRGDRNAMCGLEERLYT. Residues 289–311 form a helical membrane-spanning segment; sequence ASVVFLCLSTVNGVADPIIYVLA. At 312-380 the chain is on the cytoplasmic side; sequence TDHSRQEVSR…PAKRLIEESC (69 aa).

It belongs to the G-protein coupled receptor 1 family. As to expression, highly expressed in macrophages and hematopoietic tissues rich in lymphocytes, like spleen and thymus. Weakly expressed in heart and lung. In atherosclerotic plaques, expression is observed around the lipid core and at the shoulder region.

The protein resides in the cell membrane. In terms of biological role, may be a receptor for oxidized free fatty acids derived from linoleic and arachidonic acids such as 9-hydroxyoctadecadienoic acid (9-HODE). Activates a G alpha protein, most likely G alpha(q). May be involved in apoptosis. Functions at the G2/M checkpoint to delay mitosis. May function as a sensor that monitors the oxidative states and mediates appropriate cellular responses such as secretion of paracrine signals and attenuation of proliferation. May mediate ths accumulation of intracellular inositol phosphates at acidic pH through proton-sensing activity. This Homo sapiens (Human) protein is Probable G-protein coupled receptor 132 (GPR132).